Here is a 404-residue protein sequence, read N- to C-terminus: Protein L-Myc-1b (404 aa).

Disordered regions lie at residues 175–195 and 238–331; these read KKQV…EEID and QQHN…FLER. Residues 287–315 show a composition bias toward polar residues; it reads VPAQSPTVSASPTHTSYHLKSQPSSPQSS. Positions 321–373 constitute a bHLH domain; that stretch reads DKRKTHNFLERKRRNDLRSRFLALRDEIPGLVDCPKTPKVVILTKATEYLRTL. Residues 373-401 form a leucine-zipper region; sequence LHVSDRQKAQEKKQLKSKQQQLLRRLAEL.

As to quaternary structure, efficient DNA binding requires dimerization with another bHLH protein. Binds DNA as a heterodimer with max.

Its subcellular location is the nucleus. The sequence is that of Protein L-Myc-1b from Danio rerio (Zebrafish).